Reading from the N-terminus, the 208-residue chain is Urease accessory protein UreG (208 aa).

GTP is bound at residue glycine 12–threonine 19.

This sequence belongs to the SIMIBI class G3E GTPase family. UreG subfamily. As to quaternary structure, homodimer. UreD, UreF and UreG form a complex that acts as a GTP-hydrolysis-dependent molecular chaperone, activating the urease apoprotein by helping to assemble the nickel containing metallocenter of UreC. The UreE protein probably delivers the nickel.

The protein localises to the cytoplasm. Functionally, facilitates the functional incorporation of the urease nickel metallocenter. This process requires GTP hydrolysis, probably effectuated by UreG. The sequence is that of Urease accessory protein UreG from Rhodobacter capsulatus (Rhodopseudomonas capsulata).